A 673-amino-acid polypeptide reads, in one-letter code: Sodium/myo-inositol cotransporter 2 (673 aa).

The Extracellular portion of the chain corresponds to 1 to 27 (MESTTSSPQPPPSDALEAFPQKSMEPA). Residues 28–48 (DIVVLVLYFLFVLAVGLWSTV) traverse the membrane as a helical segment. Residues 49-56 (RTKRDTVK) lie on the Cytoplasmic side of the membrane. The helical transmembrane segment at 57 to 77 (GYFLAGGDMVWWPVGASLFAS) threads the bilayer. Position 78 (Asn-78) is a topological domain, extracellular. The helical transmembrane segment at 79 to 99 (VGSGHFIGLAGSGAAVGISVA) threads the bilayer. Topologically, residues 100–102 (AYE) are cytoplasmic. A helical transmembrane segment spans residues 103–123 (LNGLFSVLMLAWIFLPIYIAG). Over 124–180 (QVTTMPEYLKRRFGGSRIPITLASIYPSTHSLTILQVDMYAGAIFIQQSLHLDLYLA) the chain is Extracellular. Residues 181–201 (IVGLLAVTALYTVAGGLAAVI) form a helical membrane-spanning segment. Residues 202-208 (YTDALQT) lie on the Cytoplasmic side of the membrane. Residues 209–229 (VIMLIGAFILMGYSFAAVGGM) traverse the membrane as a helical segment. Over 230-272 (EGLKDQYFLALASNRSENSSCGLPREDAFHIFRDPLTSDLPWP) the chain is Extracellular. The helical transmembrane segment at 273-293 (GILFGMSIPSLWYWCTDQVIV) threads the bilayer. Topologically, residues 294–308 (QRSLAAKNLSHAKGG) are cytoplasmic. Residues 309-329 (SLMAAYLKVLPLFLMVFPGMV) form a helical membrane-spanning segment. At 330–375 (SRILFPDQVACAHPDICQRVCSNPSGCSDIAYPKLVLELLPTGLRG) the chain is on the extracellular side. Residues 376–396 (LMMAVMVAALMSSLTSIFNSA) form a helical membrane-spanning segment. The Cytoplasmic segment spans residues 397 to 418 (STIFTMDLWHHIRPRASERELM). The chain crosses the membrane as a helical span at residues 419–439 (IVGRVFVLALVLVSILWIPVV). Topologically, residues 440–446 (QASQGGQ) are extracellular. Residues 447 to 467 (LFIYIQSISSYLQPPVAVVFI) form a helical membrane-spanning segment. Topologically, residues 468-479 (MGCFWKRTNEKG) are cytoplasmic. Residues 480–500 (AFSGLILGLLLGLVRLILDFV) form a helical membrane-spanning segment. At 501–521 (YVQPRCDQPDDRPAVVKDVHY) the chain is on the extracellular side. A helical membrane pass occupies residues 522 to 542 (LYFSMILSSTTLITVFTVSWF). The Cytoplasmic segment spans residues 543–652 (TETPSKEMVS…SLEENPLVKT (110 aa)). Residues 653-673 (LLDVNCIVCISCAIFLWGYFA) traverse the membrane as a helical segment.

It belongs to the sodium:solute symporter (SSF) (TC 2.A.21) family. As to expression, expressed in kidney and small intestine.

The protein resides in the membrane. The protein localises to the apical cell membrane. The enzyme catalyses myo-inositol(out) + 2 Na(+)(out) = myo-inositol(in) + 2 Na(+)(in). The catalysed reaction is 1D-chiro-inositol(out) + 2 Na(+)(out) = 1D-chiro-inositol(in) + 2 Na(+)(in). It catalyses the reaction D-glucose(out) + 2 Na(+)(out) = D-glucose(in) + 2 Na(+)(in). It carries out the reaction D-xylose(out) + 2 Na(+)(out) = D-xylose(in) + 2 Na(+)(in). MI transport activity inhibited by D-chiro-inositol (DCI), phlorizin (Pz) and sodium (Na(+)). Insulin increases D-chiro-inositol uptake. Functionally, involved in the sodium-dependent cotransport of myo-inositol (MI) with a Na(+):MI stoichiometry of 2:1. Exclusively responsible for apical MI transport and absorption in intestine. Can also transport D-chiro-inositol (DCI) but not L-fucose. Exhibits stereospecific cotransport of both D-glucose and D-xylose. May induce apoptosis through the TNF-alpha, PDCD1 pathway. May play a role in the regulation of MI concentration in serum, involving reabsorption in at least the proximal tubule of the kidney. The chain is Sodium/myo-inositol cotransporter 2 from Rattus norvegicus (Rat).